A 69-amino-acid chain; its full sequence is Putative membrane protein insertion efficiency factor (69 aa).

This sequence belongs to the UPF0161 family.

Its subcellular location is the cell membrane. Functionally, could be involved in insertion of integral membrane proteins into the membrane. This Clostridium botulinum (strain ATCC 19397 / Type A) protein is Putative membrane protein insertion efficiency factor.